The following is a 145-amino-acid chain: Histone H2B (145 aa).

The tract at residues 1 to 52 (MAPKAAAGKKPAEKKPVEEKKAEEVPAEKKPKAGKKLPKDAGRPDKKKKRAK) is disordered. Residues lysine 9, lysine 35, and lysine 36 each carry the N6-acetyllysine modification. Residues 10–44 (KPAEKKPVEEKKAEEVPAEKKPKAGKKLPKDAGRP) show a composition bias toward basic and acidic residues. Residue lysine 141 forms a Glycyl lysine isopeptide (Lys-Gly) (interchain with G-Cter in ubiquitin) linkage.

Belongs to the histone H2B family. The nucleosome is a histone octamer containing two molecules each of H2A, H2B, H3 and H4 assembled in one H3-H4 heterotetramer and two H2A-H2B heterodimers. The octamer wraps approximately 147 bp of DNA. Post-translationally, can be acetylated to form H2BK6ac, H2BK33ac and H2BK34ac. Monoubiquitinated to form H2BK143ub1; may give a specific tag for epigenetic transcriptional activation. As to expression, in anthers, floral buds, pollen, petals and fruits.

It localises to the nucleus. Its subcellular location is the chromosome. In terms of biological role, core component of nucleosome. Nucleosomes wrap and compact DNA into chromatin, limiting DNA accessibility to the cellular machineries which require DNA as a template. Histones thereby play a central role in transcription regulation, DNA repair, DNA replication and chromosomal stability. DNA accessibility is regulated via a complex set of post-translational modifications of histones, also called histone code, and nucleosome remodeling. This is Histone H2B (HIS2B) from Capsicum annuum (Capsicum pepper).